The following is a 28-amino-acid chain: Dermaseptin-2.2TR (28 aa).

In terms of tissue distribution, expressed by the skin glands.

Its subcellular location is the secreted. Functionally, has antimicrobial activity. This chain is Dermaseptin-2.2TR, found in Phyllomedusa trinitatis (Trinidad leaf frog).